Consider the following 521-residue polypeptide: Probable feruloyl esterase B (521 aa).

The first 17 residues, 1–17, serve as a signal peptide directing secretion; that stretch reads MKVSSLLSVALPGAALA. Disulfide bonds link cysteine 26/cysteine 72 and cysteine 61/cysteine 111. N-linked (GlcNAc...) asparagine glycans are attached at residues asparagine 37, asparagine 51, asparagine 77, asparagine 95, asparagine 144, and asparagine 177. Disulfide bonds link cysteine 184–cysteine 438, cysteine 253–cysteine 270, and cysteine 279–cysteine 288. Catalysis depends on serine 185, which acts as the Acyl-ester intermediate. The Ca(2+) site is built by aspartate 254, aspartate 257, alanine 259, aspartate 261, and isoleucine 263. Residues asparagine 284, asparagine 347, asparagine 352, and asparagine 378 are each glycosylated (N-linked (GlcNAc...) asparagine). Residues aspartate 397 and histidine 437 each act as charge relay system in the active site. N-linked (GlcNAc...) asparagine glycans are attached at residues asparagine 488 and asparagine 511. Residues cysteine 498 and cysteine 520 are joined by a disulfide bond.

This sequence belongs to the tannase family.

It localises to the secreted. The enzyme catalyses feruloyl-polysaccharide + H2O = ferulate + polysaccharide.. Its function is as follows. Involved in degradation of plant cell walls. Hydrolyzes the feruloyl-arabinose ester bond in arabinoxylans as well as the feruloyl-galactose and feruloyl-arabinose ester bonds in pectin. This is Probable feruloyl esterase B (faeB) from Aspergillus niger (strain ATCC MYA-4892 / CBS 513.88 / FGSC A1513).